The following is a 177-amino-acid chain: Acireductone dioxygenase (177 aa).

His-99, His-101, Glu-105, and His-143 together coordinate Fe(2+). Ni(2+)-binding residues include His-99, His-101, Glu-105, and His-143.

It belongs to the acireductone dioxygenase (ARD) family. As to quaternary structure, monomer. Requires Fe(2+) as cofactor. Ni(2+) is required as a cofactor.

The catalysed reaction is 1,2-dihydroxy-5-(methylsulfanyl)pent-1-en-3-one + O2 = 3-(methylsulfanyl)propanoate + CO + formate + 2 H(+). The enzyme catalyses 1,2-dihydroxy-5-(methylsulfanyl)pent-1-en-3-one + O2 = 4-methylsulfanyl-2-oxobutanoate + formate + 2 H(+). It participates in amino-acid biosynthesis; L-methionine biosynthesis via salvage pathway; L-methionine from S-methyl-5-thio-alpha-D-ribose 1-phosphate: step 5/6. Its function is as follows. Catalyzes 2 different reactions between oxygen and the acireductone 1,2-dihydroxy-3-keto-5-methylthiopentene (DHK-MTPene) depending upon the metal bound in the active site. Fe-containing acireductone dioxygenase (Fe-ARD) produces formate and 2-keto-4-methylthiobutyrate (KMTB), the alpha-ketoacid precursor of methionine in the methionine recycle pathway. Ni-containing acireductone dioxygenase (Ni-ARD) produces methylthiopropionate, carbon monoxide and formate, and does not lie on the methionine recycle pathway. This chain is Acireductone dioxygenase, found in Leptospira interrogans serogroup Icterohaemorrhagiae serovar copenhageni (strain Fiocruz L1-130).